The sequence spans 761 residues: Xaa-Pro dipeptidyl-peptidase (761 aa).

Catalysis depends on charge relay system residues Ser-347, Asp-467, and His-497.

It belongs to the peptidase S15 family. Homodimer.

The protein localises to the cytoplasm. It catalyses the reaction Hydrolyzes Xaa-Pro-|- bonds to release unblocked, N-terminal dipeptides from substrates including Ala-Pro-|-p-nitroanilide and (sequentially) Tyr-Pro-|-Phe-Pro-|-Gly-Pro-|-Ile.. In terms of biological role, removes N-terminal dipeptides sequentially from polypeptides having unsubstituted N-termini provided that the penultimate residue is proline. The sequence is that of Xaa-Pro dipeptidyl-peptidase from Streptococcus agalactiae serotype III (strain NEM316).